The sequence spans 497 residues: NAD(P)H-quinone oxidoreductase subunit 2, chloroplastic (497 aa).

Helical transmembrane passes span 13 to 33 (VILP…LDLI), 37 to 57 (SAWL…ALVF), 76 to 96 (FTIS…LIST), 103 to 123 (GMGL…GLFL), 129 to 149 (LVTV…LVGY), 164 to 184 (LLMG…LYGL), 206 to 226 (IAVW…LSAF), 240 to 260 (PTPV…ALAT), 274 to 294 (WHVL…LIAA), 311 to 331 (AGYL…GMIT), 332 to 352 (YMVT…LFGL), 373 to 393 (AFCL…AGFF), 406 to 426 (GLYL…YYYL), and 462 to 482 (VGIA…NPII).

This sequence belongs to the complex I subunit 2 family. In terms of assembly, NDH is composed of at least 16 different subunits, 5 of which are encoded in the nucleus.

The protein resides in the plastid. It localises to the chloroplast thylakoid membrane. The catalysed reaction is a plastoquinone + NADH + (n+1) H(+)(in) = a plastoquinol + NAD(+) + n H(+)(out). The enzyme catalyses a plastoquinone + NADPH + (n+1) H(+)(in) = a plastoquinol + NADP(+) + n H(+)(out). In terms of biological role, NDH shuttles electrons from NAD(P)H:plastoquinone, via FMN and iron-sulfur (Fe-S) centers, to quinones in the photosynthetic chain and possibly in a chloroplast respiratory chain. The immediate electron acceptor for the enzyme in this species is believed to be plastoquinone. Couples the redox reaction to proton translocation, and thus conserves the redox energy in a proton gradient. The chain is NAD(P)H-quinone oxidoreductase subunit 2, chloroplastic from Zygnema circumcarinatum (Green alga).